The chain runs to 171 residues: Peptide deformylase (171 aa).

Positions 91 and 133 each coordinate Fe cation. The active site involves Glu134. Position 137 (His137) interacts with Fe cation.

The protein belongs to the polypeptide deformylase family. The cofactor is Fe(2+).

The enzyme catalyses N-terminal N-formyl-L-methionyl-[peptide] + H2O = N-terminal L-methionyl-[peptide] + formate. Its function is as follows. Removes the formyl group from the N-terminal Met of newly synthesized proteins. Requires at least a dipeptide for an efficient rate of reaction. N-terminal L-methionine is a prerequisite for activity but the enzyme has broad specificity at other positions. The polypeptide is Peptide deformylase (Edwardsiella ictaluri (strain 93-146)).